Consider the following 276-residue polypeptide: Protein PXR1 (276 aa).

The segment at 1–23 (MGLAGTKIKQRFGNDPRNTNWSN) is disordered. Positions 25 to 71 (TSRFGHQYLAKMGWQQGSGLGLVSHALTTHVKVSIKDDNLGLGAKLH) constitute a G-patch domain. Positions 152–172 (DDGKKSRKRKADESETKEDKK) are enriched in basic and acidic residues. The segment at 152–261 (DDGKKSRKRK…SKWIKQKRAS (110 aa)) is disordered. The span at 173–218 (TLKKHKKEKKDKKEKKEKKKKKEKKDKKDKKDKKNKKDKKDKKDKK) shows a compositional bias: basic residues. The segment covering 219-228 (DKKDKIRTGS) has biased composition (basic and acidic residues). A compositionally biased stretch (polar residues) spans 229–239 (DETLVSKESSA).

The protein belongs to the PINX1 family.

It is found in the nucleus. It localises to the nucleolus. Functionally, involved in rRNA-processing at A0, A1 and A2 sites and negatively regulates telomerase. The polypeptide is Protein PXR1 (PXR1) (Candida albicans (strain SC5314 / ATCC MYA-2876) (Yeast)).